A 98-amino-acid polypeptide reads, in one-letter code: NADH-ubiquinone oxidoreductase chain 4L (98 aa).

The next 3 membrane-spanning stretches (helical) occupy residues 2-22 (SLVY…LLMF), 29-49 (SLLC…ILIL), and 61-81 (IIML…LVMV).

Belongs to the complex I subunit 4L family. In terms of assembly, core subunit of respiratory chain NADH dehydrogenase (Complex I) which is composed of 45 different subunits.

The protein resides in the mitochondrion inner membrane. The enzyme catalyses a ubiquinone + NADH + 5 H(+)(in) = a ubiquinol + NAD(+) + 4 H(+)(out). Functionally, core subunit of the mitochondrial membrane respiratory chain NADH dehydrogenase (Complex I) which catalyzes electron transfer from NADH through the respiratory chain, using ubiquinone as an electron acceptor. Part of the enzyme membrane arm which is embedded in the lipid bilayer and involved in proton translocation. This is NADH-ubiquinone oxidoreductase chain 4L (MT-ND4L) from Galemys pyrenaicus (Iberian desman).